The following is a 262-amino-acid chain: Carbonic anhydrase 13 (262 aa).

Residues Leu4–Phe261 enclose the Alpha-carbonic anhydrase domain. The Proton donor/acceptor role is filled by His65. Zn(2+)-binding residues include His95, His97, and His120. Thr200–Val201 contacts substrate.

The protein belongs to the alpha-carbonic anhydrase family. Zn(2+) serves as cofactor. In terms of tissue distribution, expressed in thymus, small intestine, spleen, prostate, ovary, colon and testis.

It carries out the reaction hydrogencarbonate + H(+) = CO2 + H2O. With respect to regulation, inhibited by acetazolamide. In terms of biological role, reversible hydration of carbon dioxide. The sequence is that of Carbonic anhydrase 13 (CA13) from Homo sapiens (Human).